The chain runs to 441 residues: Ribulose bisphosphate carboxylase large chain (441 aa).

At Lys-5 the chain carries N6,N6,N6-trimethyllysine. 2 residues coordinate substrate: Asn-114 and Thr-164. Lys-166 serves as the catalytic Proton acceptor. Lys-168 contacts substrate. Positions 192, 194, and 195 each coordinate Mg(2+). N6-carboxylysine is present on Lys-192. The Proton acceptor role is filled by His-285. Substrate-binding residues include Arg-286, His-318, and Ser-370.

The protein belongs to the RuBisCO large chain family. Type I subfamily. In terms of assembly, heterohexadecamer of 8 large chains and 8 small chains; disulfide-linked. The disulfide link is formed within the large subunit homodimers. Mg(2+) serves as cofactor. In terms of processing, the disulfide bond which can form in the large chain dimeric partners within the hexadecamer appears to be associated with oxidative stress and protein turnover.

Its subcellular location is the plastid. It localises to the chloroplast. It catalyses the reaction 2 (2R)-3-phosphoglycerate + 2 H(+) = D-ribulose 1,5-bisphosphate + CO2 + H2O. The catalysed reaction is D-ribulose 1,5-bisphosphate + O2 = 2-phosphoglycolate + (2R)-3-phosphoglycerate + 2 H(+). RuBisCO catalyzes two reactions: the carboxylation of D-ribulose 1,5-bisphosphate, the primary event in carbon dioxide fixation, as well as the oxidative fragmentation of the pentose substrate in the photorespiration process. Both reactions occur simultaneously and in competition at the same active site. This is Ribulose bisphosphate carboxylase large chain from Pellaea andromedifolia (Coffee fern).